The following is a 150-amino-acid chain: Probable cyclase FGR4 (150 aa).

It functions in the pathway secondary metabolite biosynthesis. Probable cyclase; part of the gene cluster that mediates the biosynthesis of the tetraketides fugralins such as linear fugralin A and cyclic fugralin B, volatile compounds that play a role in the asexual reproductive cycle but are not involved in pathogenicity. Fugralin B is similar to fugralin A except for a cyclization between the carboxylic acid C-8 and the alcohol on C-4 resulting in a six membered lactone ring, probably catalyzed by the cyclase FGR4. One of the key features of fugralins is the presence of a double methyl group, which is only rarely encountered in fungal secondary metabolites. As the fugralins cluster does not contain an independent methyltransferase, the PKS FGR1 is probably responsible for adding two methyl groups to the same carbon atom. The exact role of the individual cluster genes remains unknown and further work is needed to unravel the biosynthetic pathway. The sequence is that of Probable cyclase FGR4 from Gibberella zeae (strain ATCC MYA-4620 / CBS 123657 / FGSC 9075 / NRRL 31084 / PH-1) (Wheat head blight fungus).